Reading from the N-terminus, the 479-residue chain is Aspartyl/glutamyl-tRNA(Asn/Gln) amidotransferase subunit B (479 aa).

Belongs to the GatB/GatE family. GatB subfamily. Heterotrimer of A, B and C subunits.

It carries out the reaction L-glutamyl-tRNA(Gln) + L-glutamine + ATP + H2O = L-glutaminyl-tRNA(Gln) + L-glutamate + ADP + phosphate + H(+). The catalysed reaction is L-aspartyl-tRNA(Asn) + L-glutamine + ATP + H2O = L-asparaginyl-tRNA(Asn) + L-glutamate + ADP + phosphate + 2 H(+). Functionally, allows the formation of correctly charged Asn-tRNA(Asn) or Gln-tRNA(Gln) through the transamidation of misacylated Asp-tRNA(Asn) or Glu-tRNA(Gln) in organisms which lack either or both of asparaginyl-tRNA or glutaminyl-tRNA synthetases. The reaction takes place in the presence of glutamine and ATP through an activated phospho-Asp-tRNA(Asn) or phospho-Glu-tRNA(Gln). This Geotalea uraniireducens (strain Rf4) (Geobacter uraniireducens) protein is Aspartyl/glutamyl-tRNA(Asn/Gln) amidotransferase subunit B.